We begin with the raw amino-acid sequence, 200 residues long: Eukaryotic translation initiation factor isoform 4E (200 aa).

MRNA contacts are provided by residues 44-49 (QGVAWG), K76, and 94-95 (WE). A disulfide bridge connects residues C99 and C138. MRNA is bound by residues 145–150 (RRSQDK) and 189–192 (KRER).

It belongs to the eukaryotic initiation factor 4E family. In terms of assembly, EIF4F is a multi-subunit complex, the composition of which varies with external and internal environmental conditions. It is composed of at least EIF4A, EIF4E and EIF4G. EIF4E is also known to interact with other partners. In higher plants two isoforms of EIF4F have been identified, named isoform EIF4F and isoform EIF(iso)4F. Isoform EIF4F has subunits p220 and p26, whereas isoform EIF(iso)4F has subunits p82 and p28. As to quaternary structure, (Microbial infection) Interacts with viral genome-linked protein (VPg); this interaction is possible in susceptible hosts but impaired in resistant plants. According to the redox status, the Cys-99-Cys-138 disulfide bridge may have a role in regulating protein function by affecting its ability to bind capped mRNA. As to expression, mostly expressed in roots and leaves, and, to a lower extent, in stems, flowers and immature green fruits.

The protein localises to the cytoplasm. It localises to the nucleus. Component of the protein complex eIF4F, which is involved in the recognition of the mRNA cap, ATP-dependent unwinding of 5'-terminal secondary structure and recruitment of mRNA to the ribosome. Recognizes and binds the 7-methylguanosine-containing mRNA cap during an early step in the initiation of protein synthesis and facilitates ribosome binding by inducing the unwinding of the mRNAs secondary structures. Key component of recessive resistance to potyviruses. Functionally, (Microbial infection) Susceptibility host factor required for viral infection by recruiting viral RNAs to the host ribosomal complex via an interaction with viral genome-linked protein (VPg). In Solanum lycopersicum (Tomato), this protein is Eukaryotic translation initiation factor isoform 4E.